The sequence spans 447 residues: Glutamate-1-semialdehyde 2,1-aminomutase (447 aa).

Position 277 is an N6-(pyridoxal phosphate)lysine (Lys-277).

Belongs to the class-III pyridoxal-phosphate-dependent aminotransferase family. HemL subfamily. As to quaternary structure, homodimer. Requires pyridoxal 5'-phosphate as cofactor.

Its subcellular location is the cytoplasm. It carries out the reaction (S)-4-amino-5-oxopentanoate = 5-aminolevulinate. The protein operates within porphyrin-containing compound metabolism; protoporphyrin-IX biosynthesis; 5-aminolevulinate from L-glutamyl-tRNA(Glu): step 2/2. The sequence is that of Glutamate-1-semialdehyde 2,1-aminomutase from Arthrobacter sp. (strain FB24).